Reading from the N-terminus, the 75-residue chain is U6-lycotoxin-Ls1a (75 aa).

An N-terminal signal peptide occupies residues 1 to 21 (MKLLLFTALVLVVISLIEVEA). Positions 22–25 (ENER) are excised as a propeptide.

It belongs to the neurotoxin 19 (CSTX) family. 06 (U6-Lctx) subfamily. Post-translationally, contains 4 disulfide bonds. Expressed by the venom gland.

Its subcellular location is the secreted. This Lycosa singoriensis (Wolf spider) protein is U6-lycotoxin-Ls1a.